We begin with the raw amino-acid sequence, 637 residues long: Biosynthetic arginine decarboxylase (637 aa).

Lys-101 bears the N6-(pyridoxal phosphate)lysine mark. Position 286-296 (286-296 (FDVGGGLAVDY)) interacts with substrate.

This sequence belongs to the Orn/Lys/Arg decarboxylase class-II family. SpeA subfamily. Mg(2+) is required as a cofactor. Pyridoxal 5'-phosphate serves as cofactor.

It carries out the reaction L-arginine + H(+) = agmatine + CO2. Its pathway is amine and polyamine biosynthesis; agmatine biosynthesis; agmatine from L-arginine: step 1/1. Functionally, catalyzes the biosynthesis of agmatine from arginine. The protein is Biosynthetic arginine decarboxylase of Shewanella loihica (strain ATCC BAA-1088 / PV-4).